The following is a 785-amino-acid chain: Potassium transporter 5 (785 aa).

The Cytoplasmic portion of the chain corresponds to 1–60 (MDGEEHQIDGDEVNNHENKLNEKKKSWGKLYRPDSFIIEAGQTPTNTGRRSLMSWRTTMS). Ser-35 is modified (phosphoserine). A helical membrane pass occupies residues 61–81 (LAFQSLGVVYGDIGTSPLYVY). The Extracellular segment spans residues 82-97 (ASTFTDGINDKDDVVG). Residues 98-118 (VLSLIIYTITLVALLKYVFIV) form a helical membrane-spanning segment. The Cytoplasmic portion of the chain corresponds to 119 to 184 (LQANDNGEGG…EKLENSKFAK (66 aa)). A helical transmembrane segment spans residues 185-205 (IILFLVTIMGTSMVIGDGILT). Topologically, residues 206-218 (PSISVLSAVSGIK) are extracellular. A helical membrane pass occupies residues 219–239 (SLGQNTVVGVSVAILIVLFAF). The Cytoplasmic portion of the chain corresponds to 240-247 (QRFGTDKV). The chain crosses the membrane as a helical span at residues 248–268 (GFSFAPIILVWFTFLIGIGLF). The Extracellular segment spans residues 269 to 297 (NLFKHDITVLKALNPLYIIYYFRRTGRQG). The helical transmembrane segment at 298 to 318 (WISLGGVFLCITGTEAMFADL) threads the bilayer. The Cytoplasmic segment spans residues 319 to 327 (GHFSVRAVQ). Residues 328 to 348 (ISFSCVAYPALVTIYCGQAAY) traverse the membrane as a helical segment. The Extracellular portion of the chain corresponds to 349-367 (LTKHTYNVSNTFYDSIPDP). N-linked (GlcNAc...) asparagine glycosylation is present at Asn-355. A helical transmembrane segment spans residues 368-388 (LYWPTFVVAVAASIIASQAMI). Topologically, residues 389–419 (SGAFSVISQSLRMGCFPRVKVVHTSAKYEGQ) are cytoplasmic. Residues 420–440 (VYIPEINYLLMLACIAVTLAF) form a helical membrane-spanning segment. Topologically, residues 441 to 451 (RTTEKIGHAYG) are extracellular. The helical transmembrane segment at 452–472 (IAVVTVMVITTLMVTLIMLVI) threads the bilayer. At 473-476 (WKTN) the chain is on the cytoplasmic side. A helical transmembrane segment spans residues 477–497 (IVWIAIFLVVFGSIEMLYLSS). The Extracellular segment spans residues 498 to 501 (VMYK). A helical transmembrane segment spans residues 502–522 (FTSGGYLPLTITVVLMAMMAI). Residues 523–785 (WQYVHVLKYR…LLKVGMTYEL (263 aa)) are Cytoplasmic-facing. The interval 660-699 (GGEVDETDKEEEPNAETTVVPSSNYVPSSGRIGSAHSSSS) is disordered. The span at 662–673 (EVDETDKEEEPN) shows a compositional bias: acidic residues. Polar residues predominate over residues 674–686 (AETTVVPSSNYVP). A compositionally biased stretch (low complexity) spans 687-697 (SSGRIGSAHSS).

Belongs to the HAK/KUP transporter (TC 2.A.72.3) family. Interacts with ILK1. In terms of processing, phosphorylated at the N-terminus (amino acids 1-95) by CIPK23. As to expression, predominantly expressed in the roots.

It localises to the cell membrane. High-affinity potassium transporter. Can also transport rubidium and cesium. Is essential with AKT1 for high-affinity potassium uptake in roots during seedling establishment and postgermination growth under low potassium conditions. Mediates potassium uptake by plant roots in response to low potassium conditions, by a calcium-, CBL-, and CIPK-dependent pathway. Positively regulated by the calcium sensors calcineurin B-like genes CBL1, CBL8, CBL9 and CBL10, and by phosphorylation by CIPK23. The protein is Potassium transporter 5 (POT5) of Arabidopsis thaliana (Mouse-ear cress).